A 152-amino-acid polypeptide reads, in one-letter code: Actin-related protein 2/3 complex subunit 5-B (152 aa).

The disordered stretch occupies residues 21–44 (NKFVDDQLQEEPAEPQGPDEAEVD). Residues 27–43 (QLQEEPAEPQGPDEAEV) show a composition bias toward acidic residues.

The protein belongs to the ARPC5 family. As to quaternary structure, component of the Arp2/3 complex composed of actr2/arp2, actr3/arp3, arpc1 (arpc1a or arpc1b), arpc2, arpc3, arpc4 and arpc5.

It localises to the cytoplasm. It is found in the cytoskeleton. Its subcellular location is the cell projection. The protein localises to the nucleus. Functionally, component of the Arp2/3 complex, a multiprotein complex that mediates actin polymerization upon stimulation by nucleation-promoting factor (NPF). The Arp2/3 complex mediates the formation of branched actin networks in the cytoplasm, providing the force for cell motility. In addition to its role in the cytoplasmic cytoskeleton, the Arp2/3 complex also promotes actin polymerization in the nucleus, thereby regulating gene transcription and repair of damaged DNA. The Arp2/3 complex promotes homologous recombination (HR) repair in response to DNA damage by promoting nuclear actin polymerization, leading to drive motility of double-strand breaks (DSBs). This Xenopus laevis (African clawed frog) protein is Actin-related protein 2/3 complex subunit 5-B (arpc5-b).